The primary structure comprises 159 residues: Fimbrial protein EcpB (159 aa).

Positions 1-6 (MYKQKG) are cleaved as a propeptide — leader sequence. An N-methylphenylalanine modification is found at Phe7. Residues 7-29 (FTLIELMIVIAIIGILAAIALPL) traverse the membrane as a helical segment. Residues Cys137 and Cys156 are joined by a disulfide bond.

Belongs to the N-Me-Phe pilin family.

It is found in the fimbrium. The protein localises to the membrane. This is Fimbrial protein EcpB (ecpB) from Eikenella corrodens.